A 385-amino-acid polypeptide reads, in one-letter code: Glucose-fructose oxidoreductase domain-containing protein 2 (385 aa).

A signal peptide spans 1–25; that stretch reads MKMLPGVGVFGTGSSARVLVPLLRA.

This sequence belongs to the Gfo/Idh/MocA family.

Its subcellular location is the secreted. It localises to the extracellular space. The protein localises to the extracellular matrix. Promotes matrix assembly. The protein is Glucose-fructose oxidoreductase domain-containing protein 2 (GFOD2) of Bos taurus (Bovine).